A 545-amino-acid polypeptide reads, in one-letter code: CTP synthase (545 aa).

An amidoligase domain region spans residues 1 to 266 (MTTNYIFVTG…DDYICKRFSL (266 aa)). Residue serine 14 participates in CTP binding. Serine 14 provides a ligand contact to UTP. Residues 15-20 (SLGKGI) and aspartate 72 each bind ATP. Residues aspartate 72 and glutamate 140 each contribute to the Mg(2+) site. Residues 147–149 (DIE), 187–192 (KTKPTQ), and lysine 223 contribute to the CTP site. Residues 187 to 192 (KTKPTQ) and lysine 223 contribute to the UTP site. Residue 239 to 241 (KDV) coordinates ATP. The region spanning 291–542 (TIGMVGKYIE…VKAASEYQKR (252 aa)) is the Glutamine amidotransferase type-1 domain. Residue glycine 352 participates in L-glutamine binding. Catalysis depends on cysteine 379, which acts as the Nucleophile; for glutamine hydrolysis. L-glutamine contacts are provided by residues 380-383 (LGMQ), glutamate 403, and arginine 470. Catalysis depends on residues histidine 515 and glutamate 517.

It belongs to the CTP synthase family. As to quaternary structure, homotetramer.

It carries out the reaction UTP + L-glutamine + ATP + H2O = CTP + L-glutamate + ADP + phosphate + 2 H(+). It catalyses the reaction L-glutamine + H2O = L-glutamate + NH4(+). The enzyme catalyses UTP + NH4(+) + ATP = CTP + ADP + phosphate + 2 H(+). It participates in pyrimidine metabolism; CTP biosynthesis via de novo pathway; CTP from UDP: step 2/2. Allosterically activated by GTP, when glutamine is the substrate; GTP has no effect on the reaction when ammonia is the substrate. The allosteric effector GTP functions by stabilizing the protein conformation that binds the tetrahedral intermediate(s) formed during glutamine hydrolysis. Inhibited by the product CTP, via allosteric rather than competitive inhibition. Catalyzes the ATP-dependent amination of UTP to CTP with either L-glutamine or ammonia as the source of nitrogen. Regulates intracellular CTP levels through interactions with the four ribonucleotide triphosphates. The polypeptide is CTP synthase (Enterobacter sp. (strain 638)).